The chain runs to 93 residues: OMEGA-ectatommitoxin(02)-Rm1c (93 aa).

An N-terminal signal peptide occupies residues 1-30; the sequence is MKDSYISIVIAYLMVTFILVSSMPIEGEKG. Intrachain disulfides connect Cys39–Cys52, Cys47–Cys68, and Cys70–Cys79. Residues 43 to 80 enclose the EGF-like domain; the sequence is YENYCFNGKCVHVVAQDEPGKPCYSCICDEFYIGERCG.

Belongs to the EGF domain peptide family. Expressed by the venom gland.

It is found in the secreted. Its function is as follows. Ant peptide with probable defensive activity which acts as a potent agonist of the mammalian epidermal growth factor receptor (EGFR). Mimics, both structurally and functionally, vertebrate epidermal growth factor (EGF) peptide hormones. In vivo, intraplantar injection in mice causes long-lasting (several days) hypersensitivity of the injected paw to both mechanical and thermal stimuli. Its long-lasting effect is unusual for venom toxins whose effects are usually immediate. One possible explanation is that it would reduce the duration of a nest attack, discourage future attacks, or enhance the actions of subsequent exposure to other pain-inducing venom peptides. The polypeptide is OMEGA-ectatommitoxin(02)-Rm1c (Rhytidoponera metallica (Australian green-headed ant)).